Reading from the N-terminus, the 116-residue chain is QSVEESGGRLVTPTPGLTLTCTVSGFSLSSYDMGWVRQAPGKGLEWIGIIYASGSTYYASWAKGRFTISKTSTTVDLKTSLPTEDTATYFCARQGTGLVHLAFVDVWGPGTLVTVS.

A Pyrrolidone carboxylic acid modification is found at Gln-1. Residues 1–107 (QSVEESGGRL…LVHLAFVDVW (107 aa)) form the Ig-like domain.

In Oryctolagus cuniculus (Rabbit), this protein is Ig heavy chain V-A1 region BS-5.